The primary structure comprises 594 residues: Dual specificity protein phosphatase CDC14A (594 aa).

The tract at residues 7 to 162 is a; sequence ELIGACEFMK…GLQHGFFDFE (156 aa). The interval 163–176 is linker; it reads TFDVDEYEHYERVE. The b stretch occupies residues 177-343; sequence NGDFNWIVPG…QGDIFRSKLK (167 aa). The Tyrosine-protein phosphatase domain maps to 179–336; sequence DFNWIVPGKF…KQASLWVQGD (158 aa). The active-site Phosphocysteine intermediate is the Cys278. The interval 396–435 is disordered; sequence GDKLRALKSQRQPRTSPSCAFRSDDTKGHPRAVSQPFRLS. Polar residues predominate over residues 404–413; sequence SQRQPRTSPS. A Phosphoserine modification is found at Ser484. A disordered region spans residues 487–560; the sequence is NLNAATDDPE…PGPHSAKTEE (74 aa). The segment covering 500–531 has biased composition (polar residues); that stretch reads TSSSSKAGFTASPFTNLLNGSSQPTTRNYPEL. Over residues 532–549 the composition is skewed to low complexity; that stretch reads NNNQYNRSSNSNGGNLNS. The residue at position 583 (Ser583) is a Phosphoserine.

This sequence belongs to the protein-tyrosine phosphatase family. Non-receptor class CDC14 subfamily. In terms of assembly, interacts with KIF20A, which is required to localize CDC14 to the midzone of the mitotic spindle.

It is found in the nucleus. It localises to the cytoplasm. The protein localises to the cytoskeleton. The protein resides in the microtubule organizing center. Its subcellular location is the centrosome. It is found in the spindle pole. It localises to the spindle. The protein localises to the cell projection. The protein resides in the kinocilium. Its subcellular location is the stereocilium. The catalysed reaction is O-phospho-L-tyrosyl-[protein] + H2O = L-tyrosyl-[protein] + phosphate. The enzyme catalyses O-phospho-L-seryl-[protein] + H2O = L-seryl-[protein] + phosphate. It carries out the reaction O-phospho-L-threonyl-[protein] + H2O = L-threonyl-[protein] + phosphate. In terms of biological role, dual-specificity phosphatase. Required for centrosome separation and productive cytokinesis during cell division. Dephosphorylates SIRT2 around early anaphase. May dephosphorylate the APC subunit FZR1/CDH1, thereby promoting APC-FZR1 dependent degradation of mitotic cyclins and subsequent exit from mitosis. Required for normal hearing. The sequence is that of Dual specificity protein phosphatase CDC14A (CDC14A) from Homo sapiens (Human).